The primary structure comprises 331 residues: MKFGIEFVPNEPIQKLCYYVKLAEDNGFEYCWITDHYNNRNVYMALTAIAMNTNKIKLGPGVTNPYVRSPAITASAIATLDELSGGRAVLGIGPGDKATFDALGIEWVKPVTTLKESIEVIRKLLAGERVSYEGKVVKIAGAALAVKPIQKAVPVYMGAQGPKMLETAGMIADGVLINASNPKDFEAAIPLIKKGAEAAGRSMDEIDVAAYACMSVDKNADKAKQAAVPVVAFIAAGSPPVVLERHGIDMEKVEAIRNALKSGNFPEAFKNVDDTMLEAFSIYGTPEDVVEKCKKLAEMGVTQIVAGSPIGPNKETAIKLIGKKVIPALKE.

The protein belongs to the mer family.

It is found in the cytoplasm. The enzyme catalyses 5-methyl-5,6,7,8-tetrahydromethanopterin + oxidized coenzyme F420-(gamma-L-Glu)(n) + H(+) = 5,10-methylenetetrahydromethanopterin + reduced coenzyme F420-(gamma-L-Glu)(n). The protein operates within one-carbon metabolism; methanogenesis from CO(2); methyl-coenzyme M from 5,10-methylene-5,6,7,8-tetrahydromethanopterin: step 1/2. Functionally, catalyzes the reversible reduction of methylene-H(4)MPT to methyl-H(4)MPT. In Methanocaldococcus jannaschii (strain ATCC 43067 / DSM 2661 / JAL-1 / JCM 10045 / NBRC 100440) (Methanococcus jannaschii), this protein is 5,10-methylenetetrahydromethanopterin reductase.